We begin with the raw amino-acid sequence, 575 residues long: Beta-amylase (575 aa).

The N-terminal stretch at 1–36 (MLHSQKRIWKKIGLCLLSFILGITVFTGSFGSKAEA) is a signal peptide. Residue Asp77 participates in substrate binding. Residues Glu84 and Asp88 each contribute to the Ca(2+) site. Substrate is bound by residues His117 and Asp125. An intrachain disulfide couples Cys119 to Cys127. Glu171 contributes to the Ca(2+) binding site. Glu199 serves as the catalytic Proton donor. Lys315, His320, and Thr358 together coordinate substrate. Residue Glu395 is the Proton acceptor of the active site. Residues 396-397 (NA) and Arg424 each bind substrate.

It belongs to the glycosyl hydrolase 14 family. In terms of assembly, monomer. The cofactor is Ca(2+).

It carries out the reaction Hydrolysis of (1-&gt;4)-alpha-D-glucosidic linkages in polysaccharides so as to remove successive maltose units from the non-reducing ends of the chains.. The sequence is that of Beta-amylase from Niallia circulans (Bacillus circulans).